The sequence spans 408 residues: Two-pore potassium channel 5 (408 aa).

2 disordered regions span residues 1 to 29 (MEPL…SASI) and 58 to 82 (QSVQ…SQTR). Over residues 15–29 (PIPENPSSSSSSASI) the composition is skewed to low complexity. Residues 22–115 (SSSSSASITI…TKKPSPVSKS (94 aa)) lie on the Stromal side of the membrane. Acidic residues predominate over residues 63 to 72 (DKEDQDSDSD). Residues 116–136 (IIRQAIFLLIVYLTLGVSIYS) traverse the membrane as a helical segment. The pore-forming intramembrane region spans 152–171 (DALYFCIVTMCTIGYGDIAP). A helical membrane pass occupies residues 178–198 (IFAVVFVLFGFGFLDILLSGV). Over 199 to 248 (VNYVLDLQESMILTGIQTRQHHQHHHHHRFSAKDYIIDFEKGRMRIRMKV) the chain is Stromal. The helical transmembrane segment at 249–269 (CLALCVVVLCIGVGALVLHFV) threads the bilayer. An intramembrane region (pore-forming) is located at residues 276-295 (DSVYLSVMSVTTVGYGDRAF). A helical membrane pass occupies residues 302–322 (LFAAVWLLVSTLAVARAFLYL). Topologically, residues 323–408 (AEARIDRRHR…TLPDLLGDPL (86 aa)) are stromal. EF-hand domains lie at 339-374 (LNRE…EMGK) and 378-408 (KDID…GDPL). Ca(2+)-binding residues include aspartate 352, glutamate 363, aspartate 391, asparagine 393, lysine 397, and aspartate 402.

Belongs to the two pore domain potassium channel (TC 1.A.1.7) family. In terms of assembly, homodimer. As to expression, expressed in hydathodes and the vascular tissues of roots, stems, leaves and flowers.

The protein localises to the vacuole membrane. Its function is as follows. Probable voltage-independent potassium-selective tonoplast ion channel. This is Two-pore potassium channel 5 (TPK5) from Arabidopsis thaliana (Mouse-ear cress).